Here is a 203-residue protein sequence, read N- to C-terminus: MYKKNIKIRNLGLRRIQDVCSSMNDFTITRKISTPDEIWLVQHYPVFTIGVSGTKHDVLVSNNIPIIFSNRGGKITYHAPGQLIIYVLINLFRRKLTVRRLILLMQNIIISTLKSFSIDSYILNNFPGVYVNNKKICSLGLRIRNGCSFHGMALNINMDLLPFEYINPCGNSFKMTQVIDIKPNLCFKIIKLMLMHKIREIFS.

The 172-residue stretch at 32-203 folds into the BPL/LPL catalytic domain; the sequence is ISTPDEIWLV…LMHKIREIFS (172 aa). Residues 71–78, 138–140, and 151–153 each bind substrate; these read RGGKITYH, SLG, and GMA. Residue cysteine 169 is the Acyl-thioester intermediate of the active site.

This sequence belongs to the LipB family.

The protein resides in the cytoplasm. The enzyme catalyses octanoyl-[ACP] + L-lysyl-[protein] = N(6)-octanoyl-L-lysyl-[protein] + holo-[ACP] + H(+). It functions in the pathway protein modification; protein lipoylation via endogenous pathway; protein N(6)-(lipoyl)lysine from octanoyl-[acyl-carrier-protein]: step 1/2. Catalyzes the transfer of endogenously produced octanoic acid from octanoyl-acyl-carrier-protein onto the lipoyl domains of lipoate-dependent enzymes. Lipoyl-ACP can also act as a substrate although octanoyl-ACP is likely to be the physiological substrate. The protein is Octanoyltransferase of Buchnera aphidicola subsp. Baizongia pistaciae (strain Bp).